We begin with the raw amino-acid sequence, 495 residues long: ESX-2 secretion system ATPase EccB2 (495 aa).

A helical transmembrane segment spans residues 43–63; sequence LALSMVLVAIAAGWMMLLNVL.

Belongs to the EccB family. As to quaternary structure, part of the ESX-2 / type VII secretion system (T7SS), which is composed of cytosolic and membrane components.

The protein localises to the cell membrane. In terms of biological role, an ATPase. The polypeptide is ESX-2 secretion system ATPase EccB2 (eccB2) (Mycobacterium tuberculosis (strain CDC 1551 / Oshkosh)).